The sequence spans 1059 residues: Pleckstrin homology domain-containing family M member 1 (1059 aa).

Residues 40 to 182 (TSEDGDANTM…LSFELSYKSA (143 aa)) form the RUN domain. Position 218 is a phosphoserine (Ser-218). Disordered regions lie at residues 218-244 (SLDSISHSSGSEDIEVQHSGHKIRRDR), 272-334 (LQEN…TPMF), and 354-411 (SEEP…DQGS). 2 stretches are compositionally biased toward polar residues: residues 313 to 334 (SKAQVNSAPSSGPSQESDTPMF) and 392 to 401 (GSTSDQQPSS). Ser-430, Ser-433, and Ser-488 each carry phosphoserine. The PH 1 domain maps to 536-627 (GLMKLGTVAR…WLDRVREALQ (92 aa)). Residues 634–640 (EEEWVNI) carry the LIR motif. The tract at residues 657–1059 (LPPYSALLPE…RKYQEQNTVS (403 aa)) is interaction with RAB7A. In terms of domain architecture, PH 2 spans 686–780 (DAIKESLLYL…WRDLVRKVLA (95 aa)). The Phorbol-ester/DAG-type zinc finger occupies 989 to 1043 (QHVYHCDLCTQRGFICQICHHQDIIFPFEFDTTVRCAECRTVFHQSCQAVVRKGC).

In terms of assembly, interacts (via N- and C-terminus) with RAB7A (GTP-bound form). Simultaneously interacts with RAB7A and ARL8B; bringing about clustering and fusion of late endosomes and lysosomes. Interacts (via RUN domain) with ARL8B (GTP-bound form); the interaction is required for PLEKHM1 localization to lysosomes and for ARL8B function in delivery and degradation of endocytic and autophagic cargo in lysosomes. PLEKHM1 and PLEKHM2 compete for interaction with ARL8B. Interacts with ARL8A; the interaction is weaker than with ARL8B. Interacts with VPS41, VPS11, VPS18, VPS33A and VPS39; indicative for an association with the HOPS complex; the interactions with, at least, VPS41, VPS11, VPS18 and VPS33A require ARL8B. Interacts with GABARAP, GABARAPL, GABARAPL2, MAP1LC3A, MAP1LC3B and MAP1LC3C. Interacts with PAFAH1B. Interacts (via N- and C-terminus) with NDEL1. Interacts (via C-terminus) with MAP3K7. Interacts (via N- and C-terminus) with FAM98A. Interacts (via C-terminus) with DEF8; this interaction is weak but increased in a RAB7A-dependent manner. May interact with sialyl-lex-positive protein. In terms of tissue distribution, expressed in testis, skeletal muscle, lung, liver, spleen, brain, heart, kidney and bone. Weakly expressed in monocytes (at protein level).

It is found in the autolysosome membrane. The protein resides in the endosome membrane. The protein localises to the late endosome membrane. It localises to the lysosome membrane. In terms of biological role, acts as a multivalent adapter protein that regulates Rab7-dependent and HOPS complex-dependent fusion events in the endolysosomal system and couples autophagic and the endocytic trafficking pathways. Acts as a dual effector of RAB7A and ARL8B that simultaneously binds these GTPases, bringing about clustering and fusion of late endosomes and lysosomes. Required for late stages of endolysosomal maturation, facilitating both endocytosis-mediated degradation of growth factor receptors and autophagosome clearance. Interaction with Arl8b is a crucial factor in the terminal maturation of autophagosomes and to mediate autophagosome-lysosome fusion. Positively regulates lysosome peripheral distribution and ruffled border formation in osteoclasts. May be involved in negative regulation of endocytic transport from early endosome to late endosome/lysosome implicating its association with Rab7. May have a role in sialyl-lex-mediated transduction of apoptotic signals. Involved in bone resorption. The chain is Pleckstrin homology domain-containing family M member 1 from Rattus norvegicus (Rat).